The sequence spans 593 residues: MEQPEDMASLSEFDSLAGSIPATKVEITVSCRNLLDKDMFSKSDPLCVMYTQGMENKQWREFGRTEVIDNTLNPDFVRKFIVDYFFEEKQNLRFDLYDVDSKSPDLSKHDFLGQAFCTLGEIVGSSGSRLEKPLTIGTFSLNSRTGKPMPAVSNGGVPGKKCGTIILSAEELSNCRDVATMQFCANKLDKKDFFGKSDPFLVFYRSNEDGTFTICHKTEVMKNTLNPVWQTFSIPVRALCNGDYDRTIKVEVYDWDRDGSHDFIGEFTTSYRELARGQSQFNIYEVINPKKKMKKKKYVNSGTVTLLSFAVESESTFLDYIKGGTQINFTVAIDFTASNGNPSQSTSLHYMSPYQLNAYALALTAVGEIIQHYDSDKMFPALGFGAKLPPDGRVSHEFPLNGNQENPSCCGIDGILEAYHSSLRTVQLYGPTNFAPVVTHVARNAAAVQDGSQYSVLLIITDGVISDMAQTKEAIVNAAKLPMSIIIVGVGQAEFDAMVELDGDDVRISSRGKLAERDIVQFVPFRDYVDRTGNHVLSMARLARDVLAEIPDQLVSYMKAQGIRPRPPPAAPAQSPPQSPAHSPPGSPVHTHI.

Positions 2 to 134 (EQPEDMASLS…SSGSRLEKPL (133 aa)) constitute a C2 1 domain. Residue Ser19 is modified to Phosphoserine. Ca(2+)-binding residues include Asp38, Asp44, Asp98, Asp100, Ser103, Lys108, and Asp110. The residue at position 103 (Ser103) is a Phosphoserine. Ser140 carries the post-translational modification Phosphoserine. Residues 161-284 (KCGTIILSAE…ARGQSQFNIY (124 aa)) form the C2 2 domain. Residues Asp192, Asp198, Asp254, Asp256, and Asp262 each contribute to the Ca(2+) site. Positions 328-554 (NFTVAIDFTA…DVLAEIPDQL (227 aa)) constitute a VWFA domain. Residues 562–593 (GIRPRPPPAAPAQSPPQSPAHSPPGSPVHTHI) are disordered. Pro residues predominate over residues 565-587 (PRPPPAAPAQSPPQSPAHSPPGS).

It belongs to the copine family. Requires Ca(2+) as cofactor. In terms of tissue distribution, expressed in the cerebra and cerebellum of newborn brain. Expressed in the eye, lung and muscles but weakly expressed in the adult brain (at protein level).

The protein localises to the perikaryon. The protein resides in the cell projection. In terms of biological role, probable calcium-dependent phospholipid-binding protein that may play a role in calcium-mediated intracellular processes. Plays a role in dendrite formation by melanocytes. In Mus musculus (Mouse), this protein is Copine-5.